A 100-amino-acid polypeptide reads, in one-letter code: Small ribosomal subunit protein uS14c (100 aa).

Belongs to the universal ribosomal protein uS14 family. In terms of assembly, part of the 30S ribosomal subunit.

The protein localises to the plastid. Its subcellular location is the chloroplast. Functionally, binds 16S rRNA, required for the assembly of 30S particles. The sequence is that of Small ribosomal subunit protein uS14c from Guillardia theta (Cryptophyte).